The sequence spans 345 residues: Anthranilate phosphoribosyltransferase (345 aa).

Residues G79, 82–83 (GD), T87, 89–92 (NVST), 106–114 (KHGNRAVSG), and S118 contribute to the 5-phospho-alpha-D-ribose 1-diphosphate site. G79 provides a ligand contact to anthranilate. S91 lines the Mg(2+) pocket. N109 is a binding site for anthranilate. R164 contacts anthranilate. Residues D223 and E224 each contribute to the Mg(2+) site.

Belongs to the anthranilate phosphoribosyltransferase family. In terms of assembly, homodimer. The cofactor is Mg(2+).

The enzyme catalyses N-(5-phospho-beta-D-ribosyl)anthranilate + diphosphate = 5-phospho-alpha-D-ribose 1-diphosphate + anthranilate. It participates in amino-acid biosynthesis; L-tryptophan biosynthesis; L-tryptophan from chorismate: step 2/5. Functionally, catalyzes the transfer of the phosphoribosyl group of 5-phosphorylribose-1-pyrophosphate (PRPP) to anthranilate to yield N-(5'-phosphoribosyl)-anthranilate (PRA). In Sulfurisphaera tokodaii (strain DSM 16993 / JCM 10545 / NBRC 100140 / 7) (Sulfolobus tokodaii), this protein is Anthranilate phosphoribosyltransferase.